The sequence spans 565 residues: FACT complex subunit ctc-1 (565 aa).

Disordered stretches follow at residues 151–173 (GNDGGKSNGHSGTGGKGKKASAG) and 477–565 (LGDD…KKTA). The span at 152 to 165 (NDGGKSNGHSGTGG) shows a compositional bias: gly residues. Acidic residues-rich tracts occupy residues 478–489 (GDDDMASSDEEA), 500–522 (DEDEESVDEDFQAESESDVAEEY), and 532–553 (GSEESDVDNRVDDEDEDMDDDE).

Belongs to the SSRP1 family. In terms of assembly, forms a stable heterodimer with ctc-2/spt16. The dimer of ctc-1 and ctc-2 weakly associates with multiple molecules of nhp-1/nhp6 to form the FACT complex.

The protein resides in the nucleus. The protein localises to the chromosome. Component of the FACT complex, a general chromatin factor that acts to reorganize nucleosomes. The FACT complex is involved in multiple processes that require DNA as a template such as mRNA elongation, DNA replication and DNA repair. During transcription elongation the FACT complex acts as a histone chaperone that both destabilizes and restores nucleosomal structure. It facilitates the passage of RNA polymerase II and transcription by promoting the dissociation of one histone H2A-H2B dimer from the nucleosome, then subsequently promotes the reestablishment of the nucleosome following the passage of RNA polymerase II. This chain is FACT complex subunit ctc-1 (ctc-1), found in Neurospora crassa (strain ATCC 24698 / 74-OR23-1A / CBS 708.71 / DSM 1257 / FGSC 987).